The chain runs to 439 residues: Vacuolar protein sorting-associated protein 4 (439 aa).

The 68-residue stretch at 8-75 (LSKGIDLVQK…TRAEQLKDHL (68 aa)) folds into the MIT domain. The disordered stretch occupies residues 76–113 (EKQAQNKSTAESSVNGSTKAKKSNGDGNGSGDDNDDAD). Residues 80–93 (QNKSTAESSVNGST) show a composition bias toward polar residues. 175–182 (GPPGTGKS) is an ATP binding site.

Belongs to the AAA ATPase family. As to quaternary structure, monomer or homodimer (in nucleotide-free form). Decamer, dodecamer or tetradecamer of two stacked respective homooligomeric rings (when bound to ATP); the dodecameric form seems to be predominant.

The protein localises to the endosome membrane. Pre-vacuolar protein sorting protein involved in the transport of biosynthetic membrane proteins from the prevacuolar/endosomal compartment to the vacuole. Required for multivesicular body (MVB) protein sorting. Catalyzes the ATP-dependent dissociation of class E VPS proteins from endosomal membranes, such as the disassembly of the ESCRT-III complex. Required for extracellular secretion of the secreted aspartyl proteases SAP2, SAP4, SAP5, and SAP6. Its regulation of the pre-vacuolar secretory pathway is critical for virulence. This chain is Vacuolar protein sorting-associated protein 4, found in Candida albicans (strain SC5314 / ATCC MYA-2876) (Yeast).